The following is a 458-amino-acid chain: Na(+)/H(+) antiporter NhaA (458 aa).

A run of 12 helical transmembrane segments spans residues 27-47 (FLHV…AALI), 78-98 (LHFW…GMEI), 114-134 (ILPI…YLSF), 143-163 (GWAV…ALLG), 172-192 (VILL…IAFF), 201-221 (GLAI…IGLA), 222-242 (SAWL…ITGV), 249-269 (VILG…PLTI), 316-336 (PWVA…VSFA), 346-366 (FLVV…GIIT), 388-408 (ILLI…VSML), and 421-441 (IGVL…GLIY).

The protein belongs to the NhaA Na(+)/H(+) (TC 2.A.33) antiporter family.

It is found in the cell inner membrane. The enzyme catalyses Na(+)(in) + 2 H(+)(out) = Na(+)(out) + 2 H(+)(in). Na(+)/H(+) antiporter that extrudes sodium in exchange for external protons. The sequence is that of Na(+)/H(+) antiporter NhaA from Bartonella quintana (strain Toulouse) (Rochalimaea quintana).